We begin with the raw amino-acid sequence, 549 residues long: Dihydroxy-acid dehydratase (549 aa).

Residue Asp78 participates in Mg(2+) binding. Residue Cys119 coordinates [2Fe-2S] cluster. Mg(2+) is bound by residues Asp120 and Lys121. The residue at position 121 (Lys121) is an N6-carboxylysine. A [2Fe-2S] cluster-binding site is contributed by Cys191. Glu441 contributes to the Mg(2+) binding site. The active-site Proton acceptor is the Ser466.

This sequence belongs to the IlvD/Edd family. In terms of assembly, homodimer. It depends on [2Fe-2S] cluster as a cofactor. The cofactor is Mg(2+).

The catalysed reaction is (2R)-2,3-dihydroxy-3-methylbutanoate = 3-methyl-2-oxobutanoate + H2O. The enzyme catalyses (2R,3R)-2,3-dihydroxy-3-methylpentanoate = (S)-3-methyl-2-oxopentanoate + H2O. Its pathway is amino-acid biosynthesis; L-isoleucine biosynthesis; L-isoleucine from 2-oxobutanoate: step 3/4. It participates in amino-acid biosynthesis; L-valine biosynthesis; L-valine from pyruvate: step 3/4. Functions in the biosynthesis of branched-chain amino acids. Catalyzes the dehydration of (2R,3R)-2,3-dihydroxy-3-methylpentanoate (2,3-dihydroxy-3-methylvalerate) into 2-oxo-3-methylpentanoate (2-oxo-3-methylvalerate) and of (2R)-2,3-dihydroxy-3-methylbutanoate (2,3-dihydroxyisovalerate) into 2-oxo-3-methylbutanoate (2-oxoisovalerate), the penultimate precursor to L-isoleucine and L-valine, respectively. The chain is Dihydroxy-acid dehydratase from Methanothermobacter thermautotrophicus (strain ATCC 29096 / DSM 1053 / JCM 10044 / NBRC 100330 / Delta H) (Methanobacterium thermoautotrophicum).